The sequence spans 243 residues: MSPAAPVPPDSALESPFEEMALVRGGWLWRQSSILRRWKRNWFALWLDGTLGYYHDETAQDEEDRVLIHFNVRDIKIGPECHDVQPPEGRSRDGLLTVNLREGGRLHLCAETKDDALAWKTALLEANSTPAPAGATVPPRSRRVCSKVRCVTRSWSPCKVERRIWVRVYSPYQDYYEVVPPNAHEATYVRSYYGPPYAGPGVTHVIVREDPCYSAGAPLAMGMLAGAATGAALGSLMWSPCWF.

The PH domain occupies A21–S128.

As to quaternary structure, homodimer. Interacts (via PH domain) with MYO1C. Interacts (via PH domain) with MYO7A. Binds transducins. As to expression, highly expressed in retina and brain. Levels are very low or not detectable in all other tissues tested.

Its subcellular location is the membrane. It localises to the cytoplasm. The protein is Pleckstrin homology domain-containing family B member 1 (PLEKHB1) of Homo sapiens (Human).